Reading from the N-terminus, the 337-residue chain is tRNA N6-adenosine threonylcarbamoyltransferase (337 aa).

Fe cation-binding residues include His111 and His115. Substrate is bound by residues 134–138, Asp167, Gly180, and Asn272; that span reads LVSGG. Asp300 is a binding site for Fe cation.

The protein belongs to the KAE1 / TsaD family. Fe(2+) serves as cofactor.

It localises to the cytoplasm. The catalysed reaction is L-threonylcarbamoyladenylate + adenosine(37) in tRNA = N(6)-L-threonylcarbamoyladenosine(37) in tRNA + AMP + H(+). Functionally, required for the formation of a threonylcarbamoyl group on adenosine at position 37 (t(6)A37) in tRNAs that read codons beginning with adenine. Is involved in the transfer of the threonylcarbamoyl moiety of threonylcarbamoyl-AMP (TC-AMP) to the N6 group of A37, together with TsaE and TsaB. TsaD likely plays a direct catalytic role in this reaction. The sequence is that of tRNA N6-adenosine threonylcarbamoyltransferase from Aeromonas salmonicida (strain A449).